We begin with the raw amino-acid sequence, 336 residues long: MYYPFVRKALFQLDPERAHEFTFQQLRRITGTPFEALVRQKVPAKPVNCMGLTFKNPLGLAAGLDKDGECIDALGAMGFGSIEIGTVTPRPQPGNDKPRLFRLVDAEGLINRMGFNNLGVDNLVENVKKAHYDGVLGINIGKNKDTPVEQGKDDYLICMEKIYAYAGYIAINISSPNTPGLRTLQYGEALDDLLTAIKNKQNDLQAMHHKYVPIAVKIAPDLSEEELIQVADSLVRHNIDGVIATNTTLDRSLVQGMKNCDQTGGLSGRPLQLKSTEIIRRLSLELNGRLPIIGVGGIDSVIAAREKIAAGASLVQIYSGFIFKGPPLIKEIVTHI.

FMN is bound by residues 62-66 and threonine 86; that span reads AGLDK. Residue lysine 66 participates in substrate binding. Residue 111 to 115 coordinates substrate; it reads NRMGF. Asparagine 139 and asparagine 172 together coordinate FMN. Asparagine 172 contacts substrate. Residue serine 175 is the Nucleophile of the active site. Asparagine 177 is a binding site for substrate. Positions 217 and 245 each coordinate FMN. 246–247 contacts substrate; the sequence is NT. FMN is bound by residues glycine 268, glycine 297, and 318 to 319; that span reads YS.

This sequence belongs to the dihydroorotate dehydrogenase family. Type 2 subfamily. As to quaternary structure, monomer. FMN is required as a cofactor.

It is found in the cell membrane. It carries out the reaction (S)-dihydroorotate + a quinone = orotate + a quinol. The protein operates within pyrimidine metabolism; UMP biosynthesis via de novo pathway; orotate from (S)-dihydroorotate (quinone route): step 1/1. Functionally, catalyzes the conversion of dihydroorotate to orotate with quinone as electron acceptor. This Escherichia coli (strain SE11) protein is Dihydroorotate dehydrogenase (quinone).